The chain runs to 458 residues: GTPase Der (458 aa).

EngA-type G domains follow at residues 4 to 169 (PSIA…PKDF) and 178 to 353 (VMMS…TQHR). Residues 10-17 (GRPNVGKS), 57-61 (DTGGL), 120-123 (NKCE), 184-191 (GRPNVGKS), 231-235 (DTAGI), and 296-299 (NKWD) contribute to the GTP site. The KH-like domain maps to 354 to 439 (MRVTTSVVNE…PIILLWRGKQ (86 aa)).

The protein belongs to the TRAFAC class TrmE-Era-EngA-EngB-Septin-like GTPase superfamily. EngA (Der) GTPase family. In terms of assembly, associates with the 50S ribosomal subunit.

In terms of biological role, GTPase that plays an essential role in the late steps of ribosome biogenesis. This is GTPase Der from Prochlorococcus marinus (strain MIT 9515).